The primary structure comprises 207 residues: Small ribosomal subunit protein uS4 (207 aa).

Positions 31–55 (KCKLDSKPGQHGRTSGARTSDYGTQ) are disordered. Over residues 42–53 (GRTSGARTSDYG) the composition is skewed to polar residues. One can recognise an S4 RNA-binding domain in the interval 97 to 160 (SRLDNVVYRM…KKQARILEAL (64 aa)).

It belongs to the universal ribosomal protein uS4 family. Part of the 30S ribosomal subunit. Contacts protein S5. The interaction surface between S4 and S5 is involved in control of translational fidelity.

Functionally, one of the primary rRNA binding proteins, it binds directly to 16S rRNA where it nucleates assembly of the body of the 30S subunit. In terms of biological role, with S5 and S12 plays an important role in translational accuracy. This is Small ribosomal subunit protein uS4 from Paraburkholderia phymatum (strain DSM 17167 / CIP 108236 / LMG 21445 / STM815) (Burkholderia phymatum).